We begin with the raw amino-acid sequence, 203 residues long: MSAEDYKNLPVTVEKPIPVVYDLGNLAAFDSNVLDKNDLDSSNARREEKIKSLTRDNVQLLINQLLSLPMKTTTESVGGTGGQSSVMTLLQLPDPTTDLPREKPLPKAKAMTKWEKFAAKKGIKPKERAGKMIYDEASGEWVPKWGYKGANKKLDDQWLVEVDDKVKGTDNELIDPRTLNRAERKRLVKKNEKQQRRNMKNAL.

Positions 184 to 203 (RKRLVKKNEKQQRRNMKNAL) are disordered.

It belongs to the RRS1 family. Component of a hexameric 5S RNP precursor complex, composed of 5S RNA, RRS1, RPF2, RPL5, RPL11A/RPL11B and SYO1; this complex acts as a precursor for ribosome assembly.

It localises to the nucleus. Its function is as follows. Required for ribosome biogenesis. This is Regulator of ribosome biosynthesis (RRS1) from Saccharomyces cerevisiae (strain ATCC 204508 / S288c) (Baker's yeast).